The sequence spans 720 residues: Phosphoribosylformylglycinamidine synthase subunit PurL (720 aa).

His-34 is a catalytic residue. Tyr-37 lines the ATP pocket. Mg(2+) is bound at residue Glu-83. Substrate-binding positions include Ser-84–His-87 and Arg-106. Residue His-85 is the Proton acceptor of the active site. Asp-107 provides a ligand contact to Mg(2+). Gln-231 lines the substrate pocket. Asp-259 contributes to the Mg(2+) binding site. Glu-303–Gln-305 contributes to the substrate binding site. ATP contacts are provided by Asp-480 and Gly-517. Asn-518 serves as a coordination point for Mg(2+). Ser-520 contacts substrate.

It belongs to the FGAMS family. As to quaternary structure, monomer. Part of the FGAM synthase complex composed of 1 PurL, 1 PurQ and 2 PurS subunits.

It localises to the cytoplasm. It catalyses the reaction N(2)-formyl-N(1)-(5-phospho-beta-D-ribosyl)glycinamide + L-glutamine + ATP + H2O = 2-formamido-N(1)-(5-O-phospho-beta-D-ribosyl)acetamidine + L-glutamate + ADP + phosphate + H(+). Its pathway is purine metabolism; IMP biosynthesis via de novo pathway; 5-amino-1-(5-phospho-D-ribosyl)imidazole from N(2)-formyl-N(1)-(5-phospho-D-ribosyl)glycinamide: step 1/2. In terms of biological role, part of the phosphoribosylformylglycinamidine synthase complex involved in the purines biosynthetic pathway. Catalyzes the ATP-dependent conversion of formylglycinamide ribonucleotide (FGAR) and glutamine to yield formylglycinamidine ribonucleotide (FGAM) and glutamate. The FGAM synthase complex is composed of three subunits. PurQ produces an ammonia molecule by converting glutamine to glutamate. PurL transfers the ammonia molecule to FGAR to form FGAM in an ATP-dependent manner. PurS interacts with PurQ and PurL and is thought to assist in the transfer of the ammonia molecule from PurQ to PurL. The chain is Phosphoribosylformylglycinamidine synthase subunit PurL from Haloarcula marismortui (strain ATCC 43049 / DSM 3752 / JCM 8966 / VKM B-1809) (Halobacterium marismortui).